The primary structure comprises 89 residues: Small ribosomal subunit protein uS15 (89 aa).

Positions 1 to 10 (MSITAERKAE) are enriched in basic and acidic residues. Residues 1-24 (MSITAERKAEVIQGNANKAGDTGS) form a disordered region.

It belongs to the universal ribosomal protein uS15 family. Part of the 30S ribosomal subunit. Forms a bridge to the 50S subunit in the 70S ribosome, contacting the 23S rRNA.

One of the primary rRNA binding proteins, it binds directly to 16S rRNA where it helps nucleate assembly of the platform of the 30S subunit by binding and bridging several RNA helices of the 16S rRNA. In terms of biological role, forms an intersubunit bridge (bridge B4) with the 23S rRNA of the 50S subunit in the ribosome. The polypeptide is Small ribosomal subunit protein uS15 (Rhodopseudomonas palustris (strain HaA2)).